A 314-amino-acid chain; its full sequence is Cytochrome f (314 aa).

Positions 1–29 (MTRSISISVLIISVLIMIYVITRTSISNA) are cleaved as a signal peptide. 4 residues coordinate heme: Tyr-30, Cys-50, Cys-53, and His-54. The helical transmembrane segment at 280–300 (VQGLLFFLASVILAQIFLVLK) threads the bilayer.

This sequence belongs to the cytochrome f family. As to quaternary structure, the 4 large subunits of the cytochrome b6-f complex are cytochrome b6, subunit IV (17 kDa polypeptide, petD), cytochrome f and the Rieske protein, while the 4 small subunits are PetG, PetL, PetM and PetN. The complex functions as a dimer. Heme serves as cofactor.

It is found in the plastid. The protein localises to the chloroplast thylakoid membrane. Component of the cytochrome b6-f complex, which mediates electron transfer between photosystem II (PSII) and photosystem I (PSI), cyclic electron flow around PSI, and state transitions. The chain is Cytochrome f from Illicium oligandrum (Star anise).